The following is a 962-amino-acid chain: IQ motif and SEC7 domain-containing protein 1 (962 aa).

The interval 1–96 (MACRRRYLSS…STSVLRKQAE (96 aa)) is disordered. Positions 8 to 19 (LSSLETGSSLST) are enriched in low complexity. The span at 30 to 39 (SSETGTSLDS) shows a compositional bias: polar residues. Phosphoserine occurs at positions 89, 105, and 107. The 30-residue stretch at 134–163 (TRHAARTIQTAFRQYQMNKNFERLRSSMSE) folds into the IQ domain. Residues S180, S248, and S252 each carry the phosphoserine modification. 3 disordered regions span residues 264-292 (SEEV…HRKL), 311-333 (LSPP…DLRL), and 348-516 (KEDK…DSPA). Basic and acidic residues predominate over residues 273 to 292 (ARARDTEPKPGLHGMDHRKL). Basic and acidic residues-rich tracts occupy residues 365–375 (ERPEPRLRVEH) and 429–445 (LPRE…RPLE). Residues 470 to 488 (DSINSTSNSNDTINCSSES) are compositionally biased toward low complexity. Phosphoserine is present on residues S511 and S514. The region spanning 516-709 (AFSNDVIRKR…IGIYERIRKR (194 aa)) is the SEC7 domain. In terms of domain architecture, PH spans 773–865 (HQREIFLFND…LRESVAEVQE (93 aa)). The residue at position 891 (S891) is a Phosphoserine. Position 910 is a phosphotyrosine (Y910). The segment at 921-962 (LSSSLRDLSEAGKRGRRSSAGSLESNVEFQPFQPSQPPVLCS) is disordered. Phosphoserine is present on residues S923 and S924. Residues 939–948 (SAGSLESNVE) are compositionally biased toward polar residues.

This sequence belongs to the BRAG family. Interacts with ARF1 and ARF6. Interacts with GRIA2; the interaction is required for ARF6 activation.

Its subcellular location is the cytoplasm. The protein localises to the nucleus. It localises to the postsynaptic density. It is found in the cytoplasmic vesicle. The protein resides in the secretory vesicle. Its subcellular location is the synaptic vesicle. Its function is as follows. Guanine nucleotide exchange factor for ARF1 and ARF6. Guanine nucleotide exchange factor activity is enhanced by lipid binding. Accelerates GTP binding by ARFs of all three classes. Guanine nucleotide exchange protein for ARF6, mediating internalization of beta-1 integrin. Involved in neuronal development. In neurons, plays a role in the control of vesicle formation by endocytoc cargo. Upon long term depression, interacts with GRIA2 and mediates the activation of ARF6 to internalize synaptic AMPAR receptors. This chain is IQ motif and SEC7 domain-containing protein 1, found in Rattus norvegicus (Rat).